Reading from the N-terminus, the 597-residue chain is Plasmepsin V (597 aa).

Residues 1–551 (MNNYFLRKEN…EKENIFLKVS (551 aa)) lie on the Lumenal side of the membrane. The stretch at 33–88 (CNNVENKIDNVGKKIENVGKKIGDMENKNDNVENKNDNVENKNDNVGNKNDNVKNA) forms a coiled coil. Over residues 58-75 (ENKNDNVENKNDNVENKN) the composition is skewed to basic and acidic residues. The segment at 58–83 (ENKNDNVENKNDNVENKNDNVGNKND) is disordered. A Peptidase A1 domain is found at 107-521 (YFLDIDIGKP…DLQQNQIAFI (415 aa)). Residue Asp125 is part of the active site. 7 disulfide bridges follow: Cys135-Cys218, Cys138-Cys141, Cys162-Cys173, Cys167-Cys178, Cys266-Cys525, Cys396-Cys441, and Cys450-Cys486. The segment covering 289–298 (KEKQKMDKSD) has biased composition (basic and acidic residues). The tract at residues 289 to 323 (KEKQKMDKSDNNSSNKGNVSIKLKNNDKNDDEENN) is disordered. Residues 299 to 311 (NNSSNKGNVSIKL) show a composition bias toward low complexity. The active site involves Asp372. A helical membrane pass occupies residues 552-572 (YINLYCLWLLLALTILLSLIL). At 573–597 (YVRKMFYMDYFPLSDQNKSPIQEST) the chain is on the cytoplasmic side.

The protein belongs to the peptidase A1 family. Component of a complex composed of SPC25 and PMV; the interaction is mediated via the transmembrane domains. The complex interacts with the SEC61 channel-forming translocon complex and is involved in the recognition and import of PEXEL motif-containing proteins into the ER for subsequent export. Post-translationally, it is not clear if the zymogen has a cleavable propeptide. In vitro, appears to be cleaved between Asn-87 and Ala-88. Cleavage of the putative propeptide is dispensable for catalytic activity.

The protein resides in the endoplasmic reticulum membrane. In terms of biological role, during the asexual blood stage, plays an essential role in the export of several proteins into the host erythrocytes by cleaving the pentameric localization motif RxLxE/Q/D (termed Plasmodium export element (PEXEL)) located downstream of the N-terminal secretory signal sequence. Specifically, cleaves after the leucine residue in the RxLxE/Q/D (or RxLxxE) motif of exported proteins including RESA, EMP2, EMP3, KAHRP, RIF/Rifin and STEVOR. Also, by regulating protein export, plays an essential role in gametocyte development and thus parasite transmission to the mosquito vector. The polypeptide is Plasmepsin V (Plasmodium falciparum (isolate HB3)).